The primary structure comprises 611 residues: Elongation factor 4 (611 aa).

Residues 11–193 (KHIRNFSIVA…KIVKDVPAPT (183 aa)) form the tr-type G domain. Residues 23–28 (DHGKST) and 140–143 (NKID) contribute to the GTP site.

It belongs to the TRAFAC class translation factor GTPase superfamily. Classic translation factor GTPase family. LepA subfamily.

The protein localises to the cell membrane. The enzyme catalyses GTP + H2O = GDP + phosphate + H(+). Functionally, required for accurate and efficient protein synthesis under certain stress conditions. May act as a fidelity factor of the translation reaction, by catalyzing a one-codon backward translocation of tRNAs on improperly translocated ribosomes. Back-translocation proceeds from a post-translocation (POST) complex to a pre-translocation (PRE) complex, thus giving elongation factor G a second chance to translocate the tRNAs correctly. Binds to ribosomes in a GTP-dependent manner. The polypeptide is Elongation factor 4 (Limosilactobacillus reuteri (strain DSM 20016) (Lactobacillus reuteri)).